An 882-amino-acid chain; its full sequence is MTELSPKYNPAEVEAGRYQKWLDADVFKPSGDQKAKPYSIVIPPPNVTGKLHLGHAWDTTLQDIIIRQKRMQGFDTLWLPGMDHAGIATQAKVEERLREQGISRYDLGRDKFLDKVWEWKDEYATTIKEQWGKMGLSVDYSRERFTLDEGLSKAVRKVFVDLYKKGWIYRGEFIINWDPAARTALSDIEVIHKDVEGAFYHMNYMLEDDSRALQVATTRPETMFGDVAVAVNPEDPRYKDLIGKHVILPIVNKLIPIVGDEHADPEFGTGVVKITPAHDPNDFEVGQRHNLPQVNVMNDDGTMNELAGDFAGMDRFEARQATVAKLEELGALVNIEKRVHSVGHSERSGAVVEPRLSTQWFVKMDELAKQAMDNQETDDRVDFYPPRFNDTFLQWMENVHDWVISRQLWWGHQIPAWYNAEGEIYVGEEAPEGDGWTQDEDVLDTWFSSALWPFSTMGWPDTDVEDFKRYFPTSTLVTGYDIIFFWVSRMIFQSLEFTGRQPFQNVLIHGLIRDEEGRKMSKSLGNGIDPMDVIEKYGADSLRWFLSNGSAPGQDVRFSYEKMDASWNFINKIWNISRYILMNNEGLSLEEAESNVAKVAASEAGNVTDQWILHNLNETIAKVTENFDKFEFGVAGHILYNFIWEEFANWYVELTKEVLYSDNEAEKVITRSVLLYTLDKILRLLHPIMPFVTEEIYAQYAQGSIVTVDYPTVTPAFENEAAHKGVESLKDLIRAVRNARAEVNVAPSKPITILVKTADSELEDFFTSNVNYIKRFTNPEKLEISSAIAAPELAMTSIITGAEIYLPLADLLNVEEELARLDKELAKWQKELDMVGKKLGNERFVANAKPEVVQKEKDKQADYQAKYDATQERIAEMHKLVK.

The 'HIGH' region signature appears at 45-55 (PNVTGKLHLGH). The 'KMSKS' region motif lies at 519–523 (KMSKS). Lysine 522 contacts ATP. Residues 808–882 (LADLLNVEEE…RIAEMHKLVK (75 aa)) adopt a coiled-coil conformation.

Belongs to the class-I aminoacyl-tRNA synthetase family. ValS type 1 subfamily. In terms of assembly, monomer.

The protein resides in the cytoplasm. It catalyses the reaction tRNA(Val) + L-valine + ATP = L-valyl-tRNA(Val) + AMP + diphosphate. In terms of biological role, catalyzes the attachment of valine to tRNA(Val). As ValRS can inadvertently accommodate and process structurally similar amino acids such as threonine, to avoid such errors, it has a 'posttransfer' editing activity that hydrolyzes mischarged Thr-tRNA(Val) in a tRNA-dependent manner. The chain is Valine--tRNA ligase from Streptococcus pyogenes serotype M18 (strain MGAS8232).